Here is a 442-residue protein sequence, read N- to C-terminus: DMATS-type prenyltransferase mfmD (442 aa).

Belongs to the tryptophan dimethylallyltransferase family.

It functions in the pathway secondary metabolite biosynthesis; terpenoid biosynthesis. Prenyltransferase; part of the gene cluster that mediates the biosynthesis of the phthalide-terpenoid hybrid 11'-O-desmethylfendlerol. Within the pathway, mfmD is responsible for farnesylation of the cyclopolic acid intermediate via an O-prenylation reaction. The biosynthesis of 11'-O-desmethylfendlerol begins with the NR-PKS mfmB that forms 3,5-dimethylorsellinic acid (DMOA), which is then transformed into the phthalide 5,7-dihydroxy-4-(hydroxymethyl)-6-methylphthalide by the cytochrome P450 monooxygenase mfmA and the hydrolase mfmC. Subsequently, the methyltransferase mfmE catalyzes 7-O-methylation to yield 5-hydroxy-4-(hydroxymethyl)-7-methoxy-6-methylphthalide, which undergoes C-3 hydroxylation by the cytochrome P450 monooxygenase mfmF. The resultant cyclopolic acid (2,5-dihydroxy-4-(hydroxymethyl)-7-methoxy-6-methylphthalide) is then farnesylated by the DMATS-type prenyltransferase mfmD to afford 5-O-farnesylcyclopolic acid. Finally, the Pyr4-family terpene cyclase mfmH cyclizes the farnesyl moiety of 5-O-farnesylcyclopolic acid into a drimane-like structure, thus completing the biosynthesis of 11'-O-desmethylfendlerol. This is DMATS-type prenyltransferase mfmD from Annulohypoxylon moriforme (Filamentous fungus).